Here is a 102-residue protein sequence, read N- to C-terminus: ATP-dependent Clp protease adapter protein ClpS (102 aa).

The protein belongs to the ClpS family. Binds to the N-terminal domain of the chaperone ClpA.

In terms of biological role, involved in the modulation of the specificity of the ClpAP-mediated ATP-dependent protein degradation. This chain is ATP-dependent Clp protease adapter protein ClpS, found in Shewanella amazonensis (strain ATCC BAA-1098 / SB2B).